We begin with the raw amino-acid sequence, 1402 residues long: MKDIEASKKPHTTTVAPPQINFIKNNENIFQPKPISNVTTTTVQPPQIVSPPSPPSPPQTTTIAPPTILPTTKTTTTTTTTTTTTTTVQPPQIVSPPIINNLIIQNNLNTPSLSSTPSPLPNNNNSNENDNDINNLKISKEEYQTQIEIQQQIQRQQILERQQLLQRRNQEQLDLLERHNDYQELINTHQNFVPPNNRFSQQIHVSQLKKQSSQSQLQQQLSSQSLQQIQQKSKQPPPQQQQQQQPPPPPIPLLPQIHQQLKPKQQQEQQQQQEQQQQQTENERINELRRLKRKKEYHNDEYKDDEIYLDNILKGIDIRKLEKLTAVELRKIGKTLGVPMGNNTKGETFQRIKSFIENHKKKKQKYREYQSEKNQQQKSNSKKLVNNSTIYDLPIKDIEHLEQLFWRIFRNIVLFRKIIGNLSRGGFFDQQQQQQQQQQSTMTTTSSSSSPMTSSDDKFFYCYNYIFSKTFKYDQIIHVSWIVDSNYFGLLKYKVSRGDLLVFCNHNTINDGDVNDDEDQNTKYEFCKMFKKIFNSIRSIQDKSFYRDLFTNYSEFIFDRINKRYPIDIYLVGSLAIECNCLVATKLLISEFQFRPVMNHSLQLAIKSGSYKMVKLIVTTIHRQMSLNPNNKPFDIEMFSKINNPSIKIINLLIQLRLFTYSNIINLVIADAKLINDNNENDILQFNKNLKNQIFNYSNLLNSFTFNNNINNNNNNNINNNNNNNNNNNNNNNNNNNNNNSNLSNNTIEYSKIKTKTVFNQFTIKQLINSCKLIVTFDLKNQYQQQYYKRHYEDSDNEEEEEITQASFTINTMAEIEFIETQITKEEKHCFVKKVIQKQLLKDGEKEDYDGIKRLAELYVSLNPHLKVYCNFMYKIIYGNENCYDQDLDDEDLFDYRVTRVFDSNCFKQSLKYGSPGYWIEYKEVEMKYAFLSNKYRNEITPNLLFKYVSPNNLNKQLKFIKKIYNSSIENGNSNGNGNGNGGTVIGGILDRLLLFYLIIENNNLELLSIVIKEFPLISNFCYIAKSNSEIYNLKIPRFIRSIEMLEFCFSNFRDHFYLPQSNSLTADFYGFQNVELLRKYDQLMVLDDMDKGIIVSNKKVRASFDDFHFIFEWGSSLKNYNNYLKMLAYIVEDPYGLYTIVTNEILLLSAILSPTTSSGEPLLNLNIERQLIFQEIISSFSTILEGTELKYYPEQMFQESTHLKRFFDWIFENRSEDLLIGGRCVITQSVQSHMLYRAGRLDIVLRKGYYYDDTNEGSKKIMPVGLALVLDDIGKYGDVVALEKYIRSCIPLMKQQSELLTLLDKDERESRACFSQCQRHFSSLLSKASIYGRINIFQHIFYNHQFIFDKKSLLFARKGFLSKISFKKLILECHYHKQHHILDFIQNVIGLDITPKQIKSN.

Disordered regions lie at residues 1-20, 37-94, 109-133, and 210-292; these read MKDI…PPQI, NVTT…PQIV, NTPS…DNDI, and KQSS…RRLK. Repeat copies occupy residues 12–18 and 40–46. The interval 12-92 is 4 X 7 AA repeat of T-T-T-[IV]-[AQ]-P-P; it reads TTTVAPPQIN…TTTTTVQPPQ (81 aa). The segment covering 38–47 has biased composition (low complexity); sequence VTTTTVQPPQ. The span at 48 to 58 shows a compositional bias: pro residues; that stretch reads IVSPPSPPSPP. A compositionally biased stretch (low complexity) spans 59–94; it reads QTTTIAPPTILPTTKTTTTTTTTTTTTTTVQPPQIV. 2 consecutive repeat copies span residues 60–66 and 86–92. Residues 210 to 234 are compositionally biased toward low complexity; sequence KQSSQSQLQQQLSSQSLQQIQQKSK. The segment covering 235 to 253 has biased composition (pro residues); sequence QPPPQQQQQQQPPPPPIPL. Positions 254 to 279 are enriched in low complexity; it reads LPQIHQQLKPKQQQEQQQQQEQQQQQ. Residues 350–383 are a coiled coil; the sequence is QRIKSFIENHKKKKQKYREYQSEKNQQQKSNSKK. 2 disordered regions span residues 429 to 453 and 712 to 745; these read DQQQ…SPMT and NNNN…NLSN. Low complexity predominate over residues 430–453; the sequence is QQQQQQQQQQSTMTTTSSSSSPMT.

The protein resides in the cell surface. In terms of biological role, required for correct organization of the actin cytoskeleton and cytokinesis. Also required for apical sorting of prestalk cells, a prerequisite for formation of the tip at the mound stage and subsequent formation of the fruiting body. May be required for cell adhesion. This is Defective in tip formation protein A (dtfA) from Dictyostelium discoideum (Social amoeba).